The following is a 314-amino-acid chain: Methionyl-tRNA formyltransferase (314 aa).

Position 113–116 (113–116 (SLLP)) interacts with (6S)-5,6,7,8-tetrahydrofolate.

This sequence belongs to the Fmt family.

It catalyses the reaction L-methionyl-tRNA(fMet) + (6R)-10-formyltetrahydrofolate = N-formyl-L-methionyl-tRNA(fMet) + (6S)-5,6,7,8-tetrahydrofolate + H(+). In terms of biological role, attaches a formyl group to the free amino group of methionyl-tRNA(fMet). The formyl group appears to play a dual role in the initiator identity of N-formylmethionyl-tRNA by promoting its recognition by IF2 and preventing the misappropriation of this tRNA by the elongation apparatus. The sequence is that of Methionyl-tRNA formyltransferase from Pseudomonas savastanoi pv. phaseolicola (strain 1448A / Race 6) (Pseudomonas syringae pv. phaseolicola (strain 1448A / Race 6)).